Consider the following 419-residue polypeptide: UDP-N-acetylglucosamine 1-carboxyvinyltransferase (419 aa).

Phosphoenolpyruvate is bound at residue 22 to 23; sequence KN. Position 93 (Arg-93) interacts with UDP-N-acetyl-alpha-D-glucosamine. Residue Cys-117 is the Proton donor of the active site. At Cys-117 the chain carries 2-(S-cysteinyl)pyruvic acid O-phosphothioketal. UDP-N-acetyl-alpha-D-glucosamine contacts are provided by Asp-306 and Ile-328.

It belongs to the EPSP synthase family. MurA subfamily.

It localises to the cytoplasm. The catalysed reaction is phosphoenolpyruvate + UDP-N-acetyl-alpha-D-glucosamine = UDP-N-acetyl-3-O-(1-carboxyvinyl)-alpha-D-glucosamine + phosphate. It functions in the pathway cell wall biogenesis; peptidoglycan biosynthesis. Cell wall formation. Adds enolpyruvyl to UDP-N-acetylglucosamine. The protein is UDP-N-acetylglucosamine 1-carboxyvinyltransferase of Idiomarina loihiensis (strain ATCC BAA-735 / DSM 15497 / L2-TR).